The chain runs to 360 residues: uncharacterized protein (360 aa).

The region spanning leucine 4–isoleucine 235 is the ABC transporter domain. Glycine 37 to serine 44 is an ATP binding site.

Belongs to the ABC transporter superfamily.

This is an uncharacterized protein from Escherichia coli O6:K15:H31 (strain 536 / UPEC).